The sequence spans 217 residues: Large ribosomal subunit protein uL3 (217 aa).

Residues 129–161 (SRGPMSHGSKNHRAPGSTGAGTTPGRIYPGKRM) are disordered. A compositionally biased stretch (low complexity) spans 142–153 (APGSTGAGTTPG).

The protein belongs to the universal ribosomal protein uL3 family. Part of the 50S ribosomal subunit. Forms a cluster with proteins L14 and L19.

Functionally, one of the primary rRNA binding proteins, it binds directly near the 3'-end of the 23S rRNA, where it nucleates assembly of the 50S subunit. This chain is Large ribosomal subunit protein uL3, found in Prochlorococcus marinus (strain MIT 9515).